A 399-amino-acid polypeptide reads, in one-letter code: Galactokinase (399 aa).

Substrate is bound at residue 42-45; that stretch reads EHTD. ATP-binding positions include S76 and 133-139; that span reads ASGLSSS. Mg(2+)-binding residues include S139 and E171. Residue D183 is the Proton acceptor of the active site. Substrate is bound at residue Y233.

Belongs to the GHMP kinase family. GalK subfamily.

It is found in the cytoplasm. The enzyme catalyses alpha-D-galactose + ATP = alpha-D-galactose 1-phosphate + ADP + H(+). Its pathway is carbohydrate metabolism; galactose metabolism. Functionally, catalyzes the transfer of the gamma-phosphate of ATP to D-galactose to form alpha-D-galactose-1-phosphate (Gal-1-P). This chain is Galactokinase, found in Lactococcus lactis subsp. cremoris (strain MG1363).